Here is a 406-residue protein sequence, read N- to C-terminus: Alpha-1-antitrypsin (406 aa).

Positions 1 to 24 (MTSSISWGLLLLAGLCCLVPSFLA) are cleaved as a signal peptide. A Phosphoserine modification is found at serine 33. N-linked (GlcNAc...) asparagine glycosylation is found at asparagine 59, asparagine 96, and asparagine 260. Positions 362-381 (GTTVLEAVPMSIPPDVCFKN) are RCL. A Phosphoserine modification is found at serine 372.

This sequence belongs to the serpin family. Interacts with CELA2A. Interacts with ERGIC3 and LMAN1/ERGIC53. Interacts with PRSS1/Trypsin. As to expression, plasma.

The protein resides in the secreted. Functionally, inhibitor of serine proteases. Can inhibit elastase, trypsin, chymotrypsin and plasmin. The protein is Alpha-1-antitrypsin of Meriones unguiculatus (Mongolian jird).